Reading from the N-terminus, the 1066-residue chain is Coiled-coil domain-containing protein 73 (1066 aa).

2 coiled-coil regions span residues lysine 47–glutamine 134 and leucine 178–glutamate 391. Disordered stretches follow at residues leucine 568–phenylalanine 600, serine 719–glycine 811, leucine 854–threonine 883, lysine 944–asparagine 978, and valine 1003–asparagine 1027. Composition is skewed to polar residues over residues asparagine 591–phenylalanine 600, arginine 742–alanine 781, proline 789–glycine 811, alanine 857–arginine 869, and serine 948–serine 964. A compositionally biased stretch (basic and acidic residues) spans leucine 967 to asparagine 978. Residues valine 1003–valine 1013 show a composition bias toward polar residues.

In Mus musculus (Mouse), this protein is Coiled-coil domain-containing protein 73 (Ccdc73).